Reading from the N-terminus, the 401-residue chain is E3 ubiquitin-protein ligase DA2 (401 aa).

Residues 59 to 102 form an RING-type; degenerate zinc finger; sequence CPICFLYYPSLNRSRCCMKSICTECFLQMKNPNSARPTQCPFCK. A compositionally biased stretch (basic and acidic residues) spans 139–153; that stretch reads KEMQDDEEKMQKRLE. The interval 139–164 is disordered; that stretch reads KEMQDDEEKMQKRLESCSSSTSAMTG.

As to quaternary structure, interacts with DA1 (via C-terminus).

It catalyses the reaction S-ubiquitinyl-[E2 ubiquitin-conjugating enzyme]-L-cysteine + [acceptor protein]-L-lysine = [E2 ubiquitin-conjugating enzyme]-L-cysteine + N(6)-ubiquitinyl-[acceptor protein]-L-lysine.. It participates in protein modification; protein ubiquitination. E3 ubiquitin-protein ligase involved in the regulation of organ and seed size. Acts synergistically with DA1 to regulate seed size. Functions synergistically with DA1 to restrict cell proliferation in the maternal integuments of ovules and developing seeds. Seems to function independently of BB. Possesses E3 ubiquitin-protein ligase activity in vitro. Polyubiquitinates DA1, DAR1 and DAR2, but not DAR3. This is E3 ubiquitin-protein ligase DA2 from Arabidopsis thaliana (Mouse-ear cress).